The following is a 174-amino-acid chain: Large ribosomal subunit protein uL10 (174 aa).

It belongs to the universal ribosomal protein uL10 family. In terms of assembly, part of the ribosomal stalk of the 50S ribosomal subunit. The N-terminus interacts with L11 and the large rRNA to form the base of the stalk. The C-terminus forms an elongated spine to which L12 dimers bind in a sequential fashion forming a multimeric L10(L12)X complex.

Functionally, forms part of the ribosomal stalk, playing a central role in the interaction of the ribosome with GTP-bound translation factors. In Methylobacillus flagellatus (strain ATCC 51484 / DSM 6875 / VKM B-1610 / KT), this protein is Large ribosomal subunit protein uL10.